The following is a 177-amino-acid chain: Peptidyl-tRNA hydrolase 1 (177 aa).

Residue Y18 participates in tRNA binding. H23 (proton acceptor) is an active-site residue. TRNA contacts are provided by F65, N67, and N113.

Belongs to the PTH family. In terms of assembly, monomer.

Its subcellular location is the cytoplasm. It carries out the reaction an N-acyl-L-alpha-aminoacyl-tRNA + H2O = an N-acyl-L-amino acid + a tRNA + H(+). Hydrolyzes ribosome-free peptidyl-tRNAs (with 1 or more amino acids incorporated), which drop off the ribosome during protein synthesis, or as a result of ribosome stalling. In terms of biological role, catalyzes the release of premature peptidyl moieties from peptidyl-tRNA molecules trapped in stalled 50S ribosomal subunits, and thus maintains levels of free tRNAs and 50S ribosomes. The chain is Peptidyl-tRNA hydrolase 1 from Corynebacterium glutamicum (strain ATCC 13032 / DSM 20300 / JCM 1318 / BCRC 11384 / CCUG 27702 / LMG 3730 / NBRC 12168 / NCIMB 10025 / NRRL B-2784 / 534).